We begin with the raw amino-acid sequence, 165 residues long: ATP synthase subunit b (165 aa).

The chain crosses the membrane as a helical span at residues 7-27 (STTIGDIIIVSGSVLLLFILI).

Belongs to the ATPase B chain family. In terms of assembly, F-type ATPases have 2 components, F(1) - the catalytic core - and F(0) - the membrane proton channel. F(1) has five subunits: alpha(3), beta(3), gamma(1), delta(1), epsilon(1). F(0) has three main subunits: a(1), b(2) and c(10-14). The alpha and beta chains form an alternating ring which encloses part of the gamma chain. F(1) is attached to F(0) by a central stalk formed by the gamma and epsilon chains, while a peripheral stalk is formed by the delta and b chains.

It localises to the cell membrane. Its function is as follows. F(1)F(0) ATP synthase produces ATP from ADP in the presence of a proton or sodium gradient. F-type ATPases consist of two structural domains, F(1) containing the extramembraneous catalytic core and F(0) containing the membrane proton channel, linked together by a central stalk and a peripheral stalk. During catalysis, ATP synthesis in the catalytic domain of F(1) is coupled via a rotary mechanism of the central stalk subunits to proton translocation. Component of the F(0) channel, it forms part of the peripheral stalk, linking F(1) to F(0). The chain is ATP synthase subunit b from Streptococcus agalactiae serotype Ia (strain ATCC 27591 / A909 / CDC SS700).